Consider the following 451-residue polypeptide: Eukaryotic translation initiation factor 3 subunit E (451 aa).

The region spanning 245 to 425 is the PCI domain; sequence PFFNHEPARD…GTVVMNHPPS (181 aa).

Belongs to the eIF-3 subunit E family. As to quaternary structure, component of the eukaryotic translation initiation factor 3 (eIF-3) complex.

The protein localises to the cytoplasm. Its function is as follows. Component of the eukaryotic translation initiation factor 3 (eIF-3) complex, which is involved in protein synthesis of a specialized repertoire of mRNAs and, together with other initiation factors, stimulates binding of mRNA and methionyl-tRNAi to the 40S ribosome. The eIF-3 complex specifically targets and initiates translation of a subset of mRNAs involved in cell proliferation. This chain is Eukaryotic translation initiation factor 3 subunit E (int6), found in Sclerotinia sclerotiorum (strain ATCC 18683 / 1980 / Ss-1) (White mold).